Consider the following 231-residue polypeptide: NADH-ubiquinone oxidoreductase chain 4 (231 aa).

The next 6 helical transmembrane spans lie at 1–21 (PIAGSMVLAAILLKLGGYGII), 34–54 (MFLPFIVLALWGAVLANLTCL), 63–85 (IAYSSISHMGLVVATIIIQTPWG), 89–111 (AMALMIAHGFTSSALFCLANTTY), 128–148 (ILPMATTWWLLANLMNIAIPP), and 169–189 (TIILLGLSMLITACYSLHMLL).

The protein belongs to the complex I subunit 4 family.

The protein resides in the mitochondrion membrane. The enzyme catalyses a ubiquinone + NADH + 5 H(+)(in) = a ubiquinol + NAD(+) + 4 H(+)(out). Functionally, core subunit of the mitochondrial membrane respiratory chain NADH dehydrogenase (Complex I) that is believed to belong to the minimal assembly required for catalysis. Complex I functions in the transfer of electrons from NADH to the respiratory chain. The immediate electron acceptor for the enzyme is believed to be ubiquinone. This chain is NADH-ubiquinone oxidoreductase chain 4 (MT-ND4), found in Bothrops bilineatus (Green jararaca).